A 305-amino-acid chain; its full sequence is Taste receptor type 2 member 136 (305 aa).

At 1-9 (MMSFLVSIA) the chain is on the extracellular side. A helical membrane pass occupies residues 10-30 (SIAMLVKIVLGTFANVFIVLV). Topologically, residues 31–46 (NFTDCIKKRKFLLADR) are cytoplasmic. The chain crosses the membrane as a helical span at residues 47 to 67 (ILTVLAIFRFDLLWIILMNWS). Topologically, residues 68 to 69 (SS) are extracellular. Residues 70-90 (VFHVGLYFQVRFCICVVWIVT) traverse the membrane as a helical segment. The Cytoplasmic portion of the chain corresponds to 91 to 99 (NHFNTWLAN). Residues 100–120 (ILSILYLLKIDNFSNLIFLGL) traverse the membrane as a helical segment. Over 121-127 (KGKIKCP) the chain is Extracellular. Residues 128 to 148 (YIVLLPCFVLLFPNLIMVTIC) form a helical membrane-spanning segment. Over 149-176 (ETTQANGHQGNLTGKTKLTYFTNLIAMT) the chain is Cytoplasmic. The helical transmembrane segment at 177 to 197 (FTLGSLVPFTTFMICFLLLIC) threads the bilayer. Residues 198 to 223 (SLCKHLRTMRLYGKGSQGPSASTHIK) lie on the Extracellular side of the membrane. The helical transmembrane segment at 224–244 (VLQVLISFLLLFSMFILLLII) threads the bilayer. At 245 to 305 (SDYNYTKSLE…ARFWLKEKKP (61 aa)) the chain is on the cytoplasmic side.

Belongs to the G-protein coupled receptor T2R family.

It is found in the membrane. Functionally, putative taste receptor which may play a role in the perception of bitterness. The polypeptide is Taste receptor type 2 member 136 (Tas2r136) (Mus musculus (Mouse)).